We begin with the raw amino-acid sequence, 245 residues long: 1-(5-phosphoribosyl)-5-[(5-phosphoribosylamino)methylideneamino] imidazole-4-carboxamide isomerase (245 aa).

The Proton acceptor role is filled by Asp7. Residue Asp129 is the Proton donor of the active site.

This sequence belongs to the HisA/HisF family.

The protein resides in the cytoplasm. The enzyme catalyses 1-(5-phospho-beta-D-ribosyl)-5-[(5-phospho-beta-D-ribosylamino)methylideneamino]imidazole-4-carboxamide = 5-[(5-phospho-1-deoxy-D-ribulos-1-ylimino)methylamino]-1-(5-phospho-beta-D-ribosyl)imidazole-4-carboxamide. Its pathway is amino-acid biosynthesis; L-histidine biosynthesis; L-histidine from 5-phospho-alpha-D-ribose 1-diphosphate: step 4/9. This Shigella boydii serotype 18 (strain CDC 3083-94 / BS512) protein is 1-(5-phosphoribosyl)-5-[(5-phosphoribosylamino)methylideneamino] imidazole-4-carboxamide isomerase.